Reading from the N-terminus, the 383-residue chain is Histidine decarboxylase (383 aa).

Residue His-120 coordinates substrate. Lys-233 bears the N6-(pyridoxal phosphate)lysine mark.

This sequence belongs to the group II decarboxylase family. In terms of assembly, homotetramer. It depends on pyridoxal 5'-phosphate as a cofactor.

The enzyme catalyses L-histidine + H(+) = histamine + CO2. In Acinetobacter baumannii (strain ATCC 17978 / DSM 105126 / CIP 53.77 / LMG 1025 / NCDC KC755 / 5377), this protein is Histidine decarboxylase.